A 123-amino-acid polypeptide reads, in one-letter code: MAITKDDILEAVGAMTVMELNDLVKAFEEKFGVSAAAMAVAAPAAGAAAAAEEKTEFDVVLTAAGDNKVNVIKVVRALTGLGLKEAKDMVDGAPKTVKEGVSKADAEAMLKQLTEAGAKAEIK.

Belongs to the bacterial ribosomal protein bL12 family. As to quaternary structure, homodimer. Part of the ribosomal stalk of the 50S ribosomal subunit. Forms a multimeric L10(L12)X complex, where L10 forms an elongated spine to which 2 to 4 L12 dimers bind in a sequential fashion. Binds GTP-bound translation factors.

Its function is as follows. Forms part of the ribosomal stalk which helps the ribosome interact with GTP-bound translation factors. Is thus essential for accurate translation. The polypeptide is Large ribosomal subunit protein bL12 (Laribacter hongkongensis (strain HLHK9)).